We begin with the raw amino-acid sequence, 405 residues long: uncharacterized protein (405 aa).

12 helical membrane passes run 19 to 39, 47 to 67, 85 to 105, 129 to 149, 157 to 177, 178 to 198, 224 to 244, 252 to 272, 283 to 303, 309 to 329, 344 to 364, and 366 to 386; these read ILSIVMFNFASYLTIGLPLAV, VMGFSAFWAGLVISLQYFATL, IVVFGLCGCFLSGLGYLTAGL, SFAGTGSTLWGVGVVGSLHIG, IVTYGAMAMGAPLGVVFYHWG, GLQALALIIMGVALVAILLAI, GMALALASAGFGVIATFITLF, GAAFALTLFSCAFVGTRLLFP, VAMICFSVEIIGLLLVGVATM, IGVLLAGAGFSLVFPALGVVA, TYTVFMDLSLGVTGPLAGLVM, and WAGVPVIYLAAAGLVAIALLL.

The protein belongs to the major facilitator superfamily. YhhS family.

The protein localises to the cell inner membrane. This is an uncharacterized protein from Escherichia coli O157:H7.